A 146-amino-acid chain; its full sequence is Hemoglobin A/D subunit beta (146 aa).

The Globin domain occupies 2–146 (HWTSEEKQYI…VAHALALGYH (145 aa)). Heme b is bound by residues histidine 63 and histidine 92.

This sequence belongs to the globin family. As to quaternary structure, hemoglobins A and D are heterotetramers of alpha-1, alpha-2 and two identical beta chains. As to expression, red blood cells.

Involved in oxygen transport from the lung to the various peripheral tissues. The polypeptide is Hemoglobin A/D subunit beta (Aldabrachelys gigantea (Aldabra giant tortoise)).